A 422-amino-acid polypeptide reads, in one-letter code: Serine--tRNA ligase (422 aa).

229 to 231 (TAE) is an L-serine binding site. 260–262 (RKE) is an ATP binding site. Glu283 contributes to the L-serine binding site. 347 to 350 (EISS) contributes to the ATP binding site. L-serine is bound at residue Ser383.

The protein belongs to the class-II aminoacyl-tRNA synthetase family. Type-1 seryl-tRNA synthetase subfamily. Homodimer. The tRNA molecule binds across the dimer.

Its subcellular location is the cytoplasm. It carries out the reaction tRNA(Ser) + L-serine + ATP = L-seryl-tRNA(Ser) + AMP + diphosphate + H(+). The enzyme catalyses tRNA(Sec) + L-serine + ATP = L-seryl-tRNA(Sec) + AMP + diphosphate + H(+). The protein operates within aminoacyl-tRNA biosynthesis; selenocysteinyl-tRNA(Sec) biosynthesis; L-seryl-tRNA(Sec) from L-serine and tRNA(Sec): step 1/1. Functionally, catalyzes the attachment of serine to tRNA(Ser). Is also able to aminoacylate tRNA(Sec) with serine, to form the misacylated tRNA L-seryl-tRNA(Sec), which will be further converted into selenocysteinyl-tRNA(Sec). The polypeptide is Serine--tRNA ligase (Geobacter sulfurreducens (strain ATCC 51573 / DSM 12127 / PCA)).